The chain runs to 117 residues: Conotoxin vil14a (117 aa).

The first 22 residues, 1-22 (MGFRVLVLVVMATTSALPFTFS), serve as a signal peptide directing secretion. Residues 23–90 (EEPGRSPFRP…FAETPVGQKR (68 aa)) constitute a propeptide that is removed on maturation. Residues 53–86 (RADGQPPDMRQPEMRRPEMRRPEVRQPEFAETPV) form a disordered region. The segment covering 62 to 80 (RQPEMRRPEMRRPEVRQPE) has biased composition (basic and acidic residues). 2 cysteine pairs are disulfide-bonded: Cys96/Cys116 and Cys100/Cys112.

The protein belongs to the conotoxin R superfamily. Expressed by the venom duct.

The protein localises to the secreted. This chain is Conotoxin vil14a, found in Conus villepinii (Villepin's cone).